The chain runs to 105 residues: Antithrombin-III (105 aa).

The N-terminal stretch at 1 to 17 (MHLFIGVSLRPLGHGIP) is a signal peptide. The tract at residues 38–105 (ICIYRNPEKK…MRRTSSCRPS (68 aa)) is disordered. Over residues 43–53 (NPEKKPQERRG) the composition is skewed to basic and acidic residues.

This sequence belongs to the serpin family. In terms of assembly, forms protease inhibiting heterodimer with TMPRSS7. Plasma.

It localises to the secreted. The protein localises to the extracellular space. Functionally, most important serine protease inhibitor in plasma that regulates the blood coagulation cascade. AT-III inhibits thrombin, matriptase-3/TMPRSS7, as well as factors IXa, Xa and XIa. Its inhibitory activity is greatly enhanced in the presence of heparin. The sequence is that of Antithrombin-III (SERPINC1) from Gallus gallus (Chicken).